The chain runs to 127 residues: Large ribosomal subunit protein uL22c (127 aa).

Belongs to the universal ribosomal protein uL22 family. Part of the 50S ribosomal subunit.

The protein resides in the plastid. It is found in the chloroplast. Functionally, this protein binds specifically to 23S rRNA. Its function is as follows. The globular domain of the protein is located near the polypeptide exit tunnel on the outside of the subunit, while an extended beta-hairpin is found that lines the wall of the exit tunnel in the center of the 70S ribosome. This chain is Large ribosomal subunit protein uL22c (rpl22), found in Acorus calamus var. americanus (American sweet flag).